The sequence spans 25 residues: Cytochrome c oxidase subunit 1 (25 aa).

Belongs to the heme-copper respiratory oxidase family. Requires Cu(2+) as cofactor. It depends on heme as a cofactor.

It is found in the cell inner membrane. It carries out the reaction 4 Fe(II)-[cytochrome c] + O2 + 8 H(+)(in) = 4 Fe(III)-[cytochrome c] + 2 H2O + 4 H(+)(out). It participates in energy metabolism; oxidative phosphorylation. Subunit I and II form the functional core of the enzyme complex. Electrons originating in cytochrome c are transferred via heme a and Cu(A) to the binuclear center formed by heme a3 and Cu(B). This cytochrome c oxidase shows proton pump activity across the membrane in addition to the electron transfer. In Paracoccus versutus (Thiobacillus versutus), this protein is Cytochrome c oxidase subunit 1 (ctaD).